The primary structure comprises 275 residues: Interleukin-2 receptor subunit alpha (275 aa).

A signal peptide spans 1-21 (MEPSLLMWRFFVFIVVPGCVT). Sushi domains are found at residues 22 to 81 (EACH…FCNS) and 121 to 186 (GHCE…KCIS). Residues 22–243 (EACHDDPPSL…DTFIFTTEYQ (222 aa)) are Extracellular-facing. Intrachain disulfides connect Cys-24–Cys-64, Cys-49–Cys-77, and Cys-51–Cys-79. Asn-80 carries N-linked (GlcNAc...) asparagine glycosylation. The segment at 86 to 130 (KNPVKPVTPGSEEQRERKPTDAQSQTQPPEQADLPGHCEEPPPWE) is disordered. The span at 121–130 (GHCEEPPPWE) shows a compositional bias: basic and acidic residues. 2 disulfide bridges follow: Cys-123/Cys-168 and Cys-152/Cys-184. The disordered stretch occupies residues 188-213 (GANSQAPDEAEPPESTEAPPGSGTFL). A helical membrane pass occupies residues 244–262 (IAVAGCILLLSSILLLSCL). Topologically, residues 263-275 (TWQRRWKKNRRTI) are cytoplasmic.

Non-covalent dimer of an alpha and a beta subunit. IL2R exists in 3 different forms: a high affinity dimer, an intermediate affinity monomer (beta subunit), and a low affinity monomer (alpha subunit). The high and intermediate affinity forms also associate with a gamma subunit.

The protein localises to the membrane. In terms of biological role, receptor for interleukin-2. The receptor is involved in the regulation of immune tolerance by controlling regulatory T cells (TREGs) activity. TREGs suppress the activation and expansion of autoreactive T-cells. The protein is Interleukin-2 receptor subunit alpha (IL2RA) of Ovis aries (Sheep).